The chain runs to 182 residues: MTLIAGLGNPGPKYENTRHNIGFMLIDLLKDSNFKDVSSAKFQGEVFKFNGIILLKPTTFMNLSGQSVKAVRDFYKPDRIIVIHDDLDLSFGAVKFKKGGSSGGHNGIKSIDNLIGNDYERVRVGIGHEGDAKNFVLGEFSDEEKKALDEILAYTKNAVCELLKSDINEISQKFTVKKGLIK.

TRNA is bound at residue Y14. H19 serves as the catalytic Proton acceptor. F60, N62, and N106 together coordinate tRNA.

Belongs to the PTH family. Monomer.

It localises to the cytoplasm. The enzyme catalyses an N-acyl-L-alpha-aminoacyl-tRNA + H2O = an N-acyl-L-amino acid + a tRNA + H(+). In terms of biological role, hydrolyzes ribosome-free peptidyl-tRNAs (with 1 or more amino acids incorporated), which drop off the ribosome during protein synthesis, or as a result of ribosome stalling. Functionally, catalyzes the release of premature peptidyl moieties from peptidyl-tRNA molecules trapped in stalled 50S ribosomal subunits, and thus maintains levels of free tRNAs and 50S ribosomes. This chain is Peptidyl-tRNA hydrolase, found in Campylobacter concisus (strain 13826).